Consider the following 596-residue polypeptide: Probable protein phosphatase 2C 26 (596 aa).

The interval 122 to 154 is disordered; sequence SGPLDPAVPFSGPLPAKPPKPASSSSRGFSRRF. Residues 177-584 enclose the PPM-type phosphatase domain; sequence LRRDDGVQWA…DDVTVMVISL (408 aa). Mn(2+) is bound by residues aspartate 212, glycine 213, aspartate 512, and aspartate 575.

Belongs to the PP2C family. It depends on Mg(2+) as a cofactor. Requires Mn(2+) as cofactor.

The catalysed reaction is O-phospho-L-seryl-[protein] + H2O = L-seryl-[protein] + phosphate. It carries out the reaction O-phospho-L-threonyl-[protein] + H2O = L-threonyl-[protein] + phosphate. The sequence is that of Probable protein phosphatase 2C 26 from Oryza sativa subsp. japonica (Rice).